Reading from the N-terminus, the 155-residue chain is Ribosomal RNA large subunit methyltransferase H (155 aa).

S-adenosyl-L-methionine-binding positions include Leu-73, Gly-104, and 123 to 128 (LSPLTL).

It belongs to the RNA methyltransferase RlmH family. Homodimer.

The protein localises to the cytoplasm. It catalyses the reaction pseudouridine(1915) in 23S rRNA + S-adenosyl-L-methionine = N(3)-methylpseudouridine(1915) in 23S rRNA + S-adenosyl-L-homocysteine + H(+). Specifically methylates the pseudouridine at position 1915 (m3Psi1915) in 23S rRNA. The sequence is that of Ribosomal RNA large subunit methyltransferase H from Pseudomonas entomophila (strain L48).